Reading from the N-terminus, the 391-residue chain is MAEESSCTRDCMSFSVLNWDQVSRLHEVLTEVVPIHGRGNFPTLEITLKDIVQTVRSRLEEAGIKVQDVRLNGSAAGHVLVKDNGLGCKDLDLIFHVALPTEAEFQLVRDVVLCSLLNFLPEGVNKLKISPVTLKEAYVQKLVKVCTDTDRWSLISLSNKNGKNVELKFVDSIRRQFEFSVDSFQIILDSLLFFYDCSNNPISEHFHPTVIGESMYGDFEEAFDHLQNRLIATKNPEEIRGGGLLKYSNLLVRDFRPTDQEEIETLERYMCSRFFIDFPDILEQQRKLETYLQNHFAEEERSKYDYLMILRRVVNESTVCLMGHERRQTLNLISLLALRVLAEQNIIPNATNVTCYYQPAPYVSDGNFSNYYVAHPPVTYSQPYPTWLPCN.

The protein belongs to the TENT family. Interacts with BCCIP and PABPC1; the interaction has no effect on TENT5C poly(A) polymerase function. Interacts with PLK4; this interaction leads to the TENT5C recruitment into the centrosome.

Its subcellular location is the nucleus. It localises to the cytoplasm. The protein localises to the cytoskeleton. It is found in the microtubule organizing center. The protein resides in the centrosome. The enzyme catalyses RNA(n) + ATP = RNA(n)-3'-adenine ribonucleotide + diphosphate. Its function is as follows. Catalyzes the transfer of one adenosine molecule from an ATP to an mRNA poly(A) tail bearing a 3'-OH terminal group and enhances mRNA stability and gene expression. Can also elongate RNA oligos ending with uridine molecule, provided that the sequence is adenosine-rich. Mainly targets mRNAs encoding endoplasmic reticulum-targeted protein. In Macaca fascicularis (Crab-eating macaque), this protein is Terminal nucleotidyltransferase 5C.